A 719-amino-acid chain; its full sequence is MKLKNPDKHQTLSSNAKVDKIATDSLKNETDIELKNMNNEDYLRMSEHESIDPFVSASTIQTGIGIAGKILGTLGVPFPGQIASLYSFILGELWPKGKSQWEIFMEHVEAIINRKISTYARNKALTDLKGLGDALAVYHESLESWVGNRNNTRARSVVKNQYIALELMFVQKLPSFAVSGEEVPLLPIYAQAANLHLLLLRDASIFEKNGGLSASEISTFYNRQVERTRDYSYHCVKWNNTGLNNLRATNGQSWVRYNQFRKDIELMVLDLVRVFPSYDTLVYPIKTTSQLTREVYTDAIGTVDPNQALRSTTWYNNNAPSFSAIEAAVIRSPHLLDFLEKVTIYSLLSRWSNTQYMNMWGGHRLESRPIGGALNTSTQGSTNTSINPVTLQFTSRDFYRTESWAGLNLFLTQPVNGVPRVDFHWKFPTLPIASDNFYYLGYAGVGTQLQDSENELPPETTGQPNYESYSHRLSHIGLISGSHVKALVYSWTHRSADRTNTIEPNSITQIPLVKAFNLSSGAAVVRGPGFTGGHILRRTKSGTFGHIRVNINPPFAQRYRVRMSYASTTDLQFHTSINGKAINQGNFSATMNRGEDLDYKTFRTVGFTTPFSFSDVQSTFTIGAWNFSSGNEVYIGRIEFVPVEVTYEAEYDFEKAQEKVTALFTSTNPRGLKTDVKDYHIDQVSNLVESLSDELYLDEKRELFEIVKYAKQIHIERNM.

Belongs to the delta endotoxin family.

In terms of biological role, promotes colloidosmotic lysis by binding to the midgut epithelial cells of insects. In Bacillus thuringiensis, this protein is Pesticidal crystal protein Cry1Ic (cry1Ic).